A 176-amino-acid polypeptide reads, in one-letter code: Peptide deformylase (176 aa).

Positions 94 and 136 each coordinate Fe cation. The active site involves E137. H140 is a Fe cation binding site.

It belongs to the polypeptide deformylase family. Fe(2+) is required as a cofactor.

It catalyses the reaction N-terminal N-formyl-L-methionyl-[peptide] + H2O = N-terminal L-methionyl-[peptide] + formate. Functionally, removes the formyl group from the N-terminal Met of newly synthesized proteins. Requires at least a dipeptide for an efficient rate of reaction. N-terminal L-methionine is a prerequisite for activity but the enzyme has broad specificity at other positions. The chain is Peptide deformylase from Bartonella henselae (strain ATCC 49882 / DSM 28221 / CCUG 30454 / Houston 1) (Rochalimaea henselae).